The sequence spans 646 residues: EF-hand calcium-binding domain-containing protein 6 (646 aa).

6 consecutive EF-hand domains span residues 1 to 27 (FLET…FDIP), 28 to 63 (LTPR…NYSP), 109 to 144 (DCYQ…CGCS), 214 to 249 (SSQL…FCHK), 321 to 356 (SHYH…NVQI), and 357 to 392 (LTDE…ERAA). The residue at position 29 (Thr-29) is a Phosphothreonine. A disordered region spans residues 390 to 452 (RAATPTATGD…TTAIPGTPPL (63 aa)). Positions 432 to 446 (KPQSHPCTAASTTAI) are enriched in polar residues. Residue Ser-435 is modified to Phosphoserine. 2 positions are modified to phosphothreonine: Thr-439 and Thr-449. Residues 448 to 646 (GTPPLQNCDP…YNDFLRAFLQ (199 aa)) are interaction with PARK7. EF-hand domains lie at 468–503 (GCWR…FNLD), 504–539 (ISKE…LLKA), 579–614 (HCWR…YSIN), and 615–646 (LSEE…AFLQ). Positions 552 to 646 (NAHKMKDSGA…YNDFLRAFLQ (95 aa)) are interaction with AR.

In terms of assembly, microtubule inner protein component of sperm flagellar doublet microtubules. Binds PARK7. Part of a ternary complex containing PARK7, EFCAB6/DJBP and AR.

Its subcellular location is the nucleus. It localises to the cytoplasm. It is found in the cytoskeleton. The protein resides in the flagellum axoneme. Its function is as follows. Negatively regulates the androgen receptor by recruiting histone deacetylase complex, and protein DJ-1 antagonizes this inhibition by abrogation of this complex. Microtubule inner protein (MIP) part of the dynein-decorated doublet microtubules (DMTs) in cilia axoneme, which is required for motile cilia beating. This chain is EF-hand calcium-binding domain-containing protein 6 (EFCAB6), found in Macaca fascicularis (Crab-eating macaque).